Reading from the N-terminus, the 245-residue chain is Sugar fermentation stimulation protein homolog (245 aa).

It belongs to the SfsA family.

In Rhodospirillum rubrum (strain ATCC 11170 / ATH 1.1.1 / DSM 467 / LMG 4362 / NCIMB 8255 / S1), this protein is Sugar fermentation stimulation protein homolog.